A 202-amino-acid chain; its full sequence is Ribosome maturation factor RimM (202 aa).

The PRC barrel domain occupies 121-202; that stretch reads ADEYYWVDLI…CITVDWQPDY (82 aa).

It belongs to the RimM family. Binds ribosomal protein uS19.

It localises to the cytoplasm. An accessory protein needed during the final step in the assembly of 30S ribosomal subunit, possibly for assembly of the head region. Essential for efficient processing of 16S rRNA. May be needed both before and after RbfA during the maturation of 16S rRNA. It has affinity for free ribosomal 30S subunits but not for 70S ribosomes. This Polaromonas naphthalenivorans (strain CJ2) protein is Ribosome maturation factor RimM.